The primary structure comprises 555 residues: Glutamine--tRNA ligase (555 aa).

Residues proline 35–histidine 45 carry the 'HIGH' region motif. ATP-binding positions include glutamate 36 to asparagine 38 and histidine 42 to serine 48. 2 residues coordinate L-glutamine: aspartate 68 and tyrosine 213. Residues threonine 232, arginine 262–leucine 263, and methionine 270–lysine 272 each bind ATP. The 'KMSKS' region motif lies at valine 269 to arginine 273.

Belongs to the class-I aminoacyl-tRNA synthetase family. In terms of assembly, monomer.

The protein localises to the cytoplasm. It catalyses the reaction tRNA(Gln) + L-glutamine + ATP = L-glutaminyl-tRNA(Gln) + AMP + diphosphate. The polypeptide is Glutamine--tRNA ligase (Photobacterium profundum (strain SS9)).